A 600-amino-acid polypeptide reads, in one-letter code: Proline--tRNA ligase (600 aa).

Belongs to the class-II aminoacyl-tRNA synthetase family. ProS type 1 subfamily. As to quaternary structure, homodimer.

The protein localises to the cytoplasm. It carries out the reaction tRNA(Pro) + L-proline + ATP = L-prolyl-tRNA(Pro) + AMP + diphosphate. Functionally, catalyzes the attachment of proline to tRNA(Pro) in a two-step reaction: proline is first activated by ATP to form Pro-AMP and then transferred to the acceptor end of tRNA(Pro). As ProRS can inadvertently accommodate and process non-cognate amino acids such as alanine and cysteine, to avoid such errors it has two additional distinct editing activities against alanine. One activity is designated as 'pretransfer' editing and involves the tRNA(Pro)-independent hydrolysis of activated Ala-AMP. The other activity is designated 'posttransfer' editing and involves deacylation of mischarged Ala-tRNA(Pro). The misacylated Cys-tRNA(Pro) is not edited by ProRS. The chain is Proline--tRNA ligase from Prochlorococcus marinus (strain AS9601).